The chain runs to 389 residues: Probable acyl-CoA dehydrogenase fadE25 (389 aa).

It belongs to the acyl-CoA dehydrogenase family. It depends on FAD as a cofactor.

It carries out the reaction a 2,3-saturated acyl-CoA + A = a 2,3-dehydroacyl-CoA + AH2. This Mycobacterium leprae (strain TN) protein is Probable acyl-CoA dehydrogenase fadE25 (fadE25).